The following is a 329-amino-acid chain: MASQLTDAFARKFYYLRLSITDVCNFRCTYCLPDGYKPGGVTNNGFLTVDEIRRVTRAFASLGTEKVRLTGGEPSLRRDFTDIIAAVGENDAIRQIAVTTNGYRLARDAANWREAGLTGVNVSVDSLDARQFHAITGQDKFRQVMAGIDAAFDAGFEKVKVNTVLMRDVNHHQLDTFLAWIQPRPIQLRFIELMETGEGSDLFRKHHISGQVLRDELIKRGWIHQLRQRSDGPAQVFCHPDYAGEIGLIMPYEKDFCATCNRLRVSSVGKLHLCLFGDGGVSLRDLLQDDAQQYALEKRISDALREKKQTHFLHQSNTGITQNLSYIGG.

The region spanning 8 to 234 (AFARKFYYLR…QLRQRSDGPA (227 aa)) is the Radical SAM core domain. R17 is a binding site for GTP. [4Fe-4S] cluster-binding residues include C24 and C28. Y30 contributes to the S-adenosyl-L-methionine binding site. C31 contributes to the [4Fe-4S] cluster binding site. R68 contacts GTP. G72 serves as a coordination point for S-adenosyl-L-methionine. T99 contributes to the GTP binding site. S123 contacts S-adenosyl-L-methionine. K160 serves as a coordination point for GTP. M194 is a binding site for S-adenosyl-L-methionine. [4Fe-4S] cluster-binding residues include C257 and C260. 262-264 (RLR) contributes to the GTP binding site. C274 serves as a coordination point for [4Fe-4S] cluster.

Belongs to the radical SAM superfamily. MoaA family. As to quaternary structure, monomer and homodimer. The cofactor is [4Fe-4S] cluster.

The enzyme catalyses GTP + AH2 + S-adenosyl-L-methionine = (8S)-3',8-cyclo-7,8-dihydroguanosine 5'-triphosphate + 5'-deoxyadenosine + L-methionine + A + H(+). It participates in cofactor biosynthesis; molybdopterin biosynthesis. Its function is as follows. Catalyzes the cyclization of GTP to (8S)-3',8-cyclo-7,8-dihydroguanosine 5'-triphosphate. In Salmonella dublin (strain CT_02021853), this protein is GTP 3',8-cyclase.